A 264-amino-acid polypeptide reads, in one-letter code: Glutamate racemase (264 aa).

Substrate is bound by residues 10–11 and 42–43; these read DS and YG. The active-site Proton donor/acceptor is the Cys-73. Substrate is bound at residue 74-75; the sequence is NT. Catalysis depends on Cys-183, which acts as the Proton donor/acceptor. 184–185 contributes to the substrate binding site; the sequence is TH.

It belongs to the aspartate/glutamate racemases family.

The catalysed reaction is L-glutamate = D-glutamate. It participates in cell wall biogenesis; peptidoglycan biosynthesis. Provides the (R)-glutamate required for cell wall biosynthesis. The protein is Glutamate racemase of Streptococcus pyogenes serotype M6 (strain ATCC BAA-946 / MGAS10394).